A 203-amino-acid chain; its full sequence is Imidazoleglycerol-phosphate dehydratase (203 aa).

Belongs to the imidazoleglycerol-phosphate dehydratase family.

It localises to the cytoplasm. It carries out the reaction D-erythro-1-(imidazol-4-yl)glycerol 3-phosphate = 3-(imidazol-4-yl)-2-oxopropyl phosphate + H2O. It participates in amino-acid biosynthesis; L-histidine biosynthesis; L-histidine from 5-phospho-alpha-D-ribose 1-diphosphate: step 6/9. In Salinispora arenicola (strain CNS-205), this protein is Imidazoleglycerol-phosphate dehydratase.